A 595-amino-acid chain; its full sequence is Chaperone protein HscA homolog (595 aa).

It belongs to the heat shock protein 70 family.

Its function is as follows. Chaperone involved in the maturation of iron-sulfur cluster-containing proteins. Has a low intrinsic ATPase activity which is markedly stimulated by HscB. The polypeptide is Chaperone protein HscA homolog (Rickettsia peacockii (strain Rustic)).